A 1345-amino-acid chain; its full sequence is Mediator of RNA polymerase II transcription subunit 13 (1345 aa).

Disordered stretches follow at residues 363–387 and 402–537; these read KSQT…SPYP and FMAS…AESG. Residues 364–375 are compositionally biased toward low complexity; sequence SQTNQQQTSSNS. Positions 406–415 are enriched in polar residues; sequence PSVSGNSNEL. Over residues 469 to 482 the composition is skewed to acidic residues; sequence LFGEEDEDEDDADL. Residues 486-501 show a composition bias toward polar residues; that stretch reads SNNDSTGESNANNSKG.

This sequence belongs to the Mediator complex subunit 13 family. As to quaternary structure, component of the SRB8-11 complex, which itself associates with the Mediator complex.

The protein resides in the nucleus. Component of the SRB8-11 complex. The SRB8-11 complex is a regulatory module of the Mediator complex which is itself involved in regulation of basal and activated RNA polymerase II-dependent transcription. The SRB8-11 complex may be involved in the transcriptional repression of a subset of genes regulated by Mediator. It may inhibit the association of the Mediator complex with RNA polymerase II to form the holoenzyme complex. This chain is Mediator of RNA polymerase II transcription subunit 13 (SSN2), found in Candida glabrata (strain ATCC 2001 / BCRC 20586 / JCM 3761 / NBRC 0622 / NRRL Y-65 / CBS 138) (Yeast).